Here is a 463-residue protein sequence, read N- to C-terminus: Matrix remodeling-associated protein 8 (463 aa).

Positions 1–19 (MELRAWVLLWRLVLLQSSA) are cleaved as a signal peptide. The Extracellular portion of the chain corresponds to 20 to 362 (VLLSSGPSGP…PEGRAHFFQQ (343 aa)). Ig-like V-type domains follow at residues 29–173 (PATS…LEVT) and 176–308 (PRAA…LRVT). 2 disulfides stabilise this stretch: Cys-54–Cys-153 and Cys-202–Cys-288. Asn-135 carries N-linked (GlcNAc...) asparagine glycosylation. Residue Ser-244 is modified to Phosphoserine. The RGD signature appears at 268-270 (RGD). The disordered stretch occupies residues 309–341 (EPAARPPPPPRDSPGNGSSHSGAPGPGARDPTL). Low complexity predominate over residues 321–335 (SPGNGSSHSGAPGPG). A glycan (N-linked (GlcNAc...) asparagine) is linked at Asn-324. The helical transmembrane segment at 363-383 (LGYVLATLLLFILLLITVVLA) threads the bilayer. The Cytoplasmic portion of the chain corresponds to 384–463 (TRQRRRGGYE…DKEFRKEYCK (80 aa)).

As to quaternary structure, homodimer in cis. Does not appear to form trans-homodimers. Interacts with ITGB3; the interaction inhibits ITGAV:ITGB3 heterodimer formation.

It is found in the cell membrane. The protein localises to the cell junction. The protein resides in the tight junction. Its subcellular location is the cytoplasm. It localises to the cell projection. It is found in the cilium membrane. The protein localises to the nucleus. In terms of biological role, transmembrane protein which can modulate activity of various signaling pathways, probably via binding to integrin ITGAV:ITGB3. Mediates heterophilic cell-cell interactions in vitro. Inhibits osteoclastogenesis downstream of TNFSF11/RANKL and CSF1, where it may function by attenuating signaling via integrin ITGB3 and MAP kinase p38. Plays a role in cartilage formation where it promotes proliferation and maturation of growth plate chondrocytes. Stimulates formation of primary cilia in chondrocytes. Enhances expression of genes involved in the hedgehog signaling pathway in chondrocytes, including the hedgehog signaling molecule IHH; may also promote signaling via the PTHLH/PTHrP pathway. Plays a role in angiogenesis where it suppresses migration of endothelial cells and also promotes their apoptosis. Inhibits VEGF-induced activation of AKT and p38 MAP kinase in endothelial cells. Also inhibits VTN (vitronectin)-mediated integrin ITGAV:ITGB3 signaling and activation of PTK2/FAK. May play a role in the maturation and maintenance of the blood-brain barrier. The protein is Matrix remodeling-associated protein 8 (MXRA8) of Bos taurus (Bovine).